The primary structure comprises 495 residues: Internal alternative NAD(P)H-ubiquinone oxidoreductase A1, mitochondrial (495 aa).

The N-terminal 41 residues, 1–41 (MPWFKNLIKISKTITNQSSSYKSITPLASPLLTQFLQFTKQ), are a transit peptide targeting the mitochondrion. Residue 61–91 (RIVVLGSGWAGCRLMKDIDTNIYDVVCVSPR) participates in FAD binding. 228-264 (LHCVVVGGGPTGVEFSGELSDFILKDVHQRYAHVKDY) serves as a coordination point for NAD(+). The Microbody targeting signal signature appears at 486 to 495 (LVFGRDISRI).

It belongs to the NADH dehydrogenase family. The cofactor is FAD.

The protein resides in the mitochondrion inner membrane. It is found in the peroxisome. The enzyme catalyses a quinone + NADH + H(+) = a quinol + NAD(+). It carries out the reaction a ubiquinone + NADH + H(+) = a ubiquinol + NAD(+). Its function is as follows. Alternative NADH-ubiquinone oxidoreductase which catalyzes the oxidation of mitochondrial NADH does not translocate protons across the inner mitochondrial membrane. This is Internal alternative NAD(P)H-ubiquinone oxidoreductase A1, mitochondrial (NDA1) from Solanum tuberosum (Potato).